The following is a 303-amino-acid chain: N-acetyl-D-glucosamine kinase (303 aa).

Residues 4–11 (GFDIGGTK) and 133–140 (GVGGGLVL) contribute to the ATP site. Zn(2+) is bound by residues His157, Cys177, Cys179, and Cys184.

Belongs to the ROK (NagC/XylR) family. NagK subfamily.

It carries out the reaction N-acetyl-D-glucosamine + ATP = N-acetyl-D-glucosamine 6-phosphate + ADP + H(+). It participates in cell wall biogenesis; peptidoglycan recycling. Functionally, catalyzes the phosphorylation of N-acetyl-D-glucosamine (GlcNAc) derived from cell-wall degradation, yielding GlcNAc-6-P. The sequence is that of N-acetyl-D-glucosamine kinase from Salmonella choleraesuis (strain SC-B67).